A 223-amino-acid chain; its full sequence is Serine/threonine/tyrosine-interacting protein A (223 aa).

One can recognise a Tyrosine-protein phosphatase domain in the interval 28–176 (EMQEILPGLF…LQEYEAIYLA (149 aa)).

The protein belongs to the protein-tyrosine phosphatase family. Non-receptor class subfamily.

Functionally, catalytically inactive phosphatase. This is Serine/threonine/tyrosine-interacting protein A (styx-a) from Xenopus laevis (African clawed frog).